We begin with the raw amino-acid sequence, 381 residues long: Cytochrome b (381 aa).

4 helical membrane-spanning segments follow: residues 34–54 (FGSH…FLAM), 78–99 (WLIR…YLHI), 114–134 (WNIG…GYVL), and 179–199 (FFAF…IHLL). H84 and H98 together coordinate heme b. Positions 183 and 197 each coordinate heme b. A ubiquinone is bound at residue H202. The next 4 helical transmembrane spans lie at 227–247 (YKDL…ALFM), 289–309 (LGGV…PLLH), 321–341 (MTQI…WIGG), and 348–368 (FIMV…IIMP).

Belongs to the cytochrome b family. In terms of assembly, the cytochrome bc1 complex contains 3 respiratory subunits (MT-CYB, CYC1 and UQCRFS1), 2 core proteins (UQCRC1 and UQCRC2) and probably 6 low-molecular weight proteins. It depends on heme b as a cofactor.

It localises to the mitochondrion inner membrane. Component of the ubiquinol-cytochrome c reductase complex (complex III or cytochrome b-c1 complex) that is part of the mitochondrial respiratory chain. The b-c1 complex mediates electron transfer from ubiquinol to cytochrome c. Contributes to the generation of a proton gradient across the mitochondrial membrane that is then used for ATP synthesis. This Carcharhinus porosus (Smalltail shark) protein is Cytochrome b (mt-cyb).